Reading from the N-terminus, the 434-residue chain is MNITFIGSGYVGLVSGVMMSYLGHNVTCLDNDEAKISKLNKRILPIYETKLDKYFTQALEHERLKFTSFYNEELKNTEAVFITVGTPSKASGEADLSYVYEAIDKISLHINKDCLIVIKSTVPPNSCNNIINYLKEKGFSFNVASNPEFLREGNAVEDFLYPDRIVIGVNNKESEDILRKIYMPLTDNGAELVITDLVTAELIKYGSNSFLATKIAFINEMANLCEKIGADIKNLSKGIGLDKRIGTAFLNAGPGFGGSCFPKDILALNSIIKNNYIDSKILEAVIRSNKERPSLMVDKIATLLDEDLKGKNIAVLGLTYKAGTDDVRASPAIEIIKNLLDKGTYVKAFDPMGLENSQKTFQNENLLYLDSAIKVCDSSDAIIITTEWSEFQALDWQKIYSLVKTPIIIDLRNILKADEVESIGFRYYTVGSKI.

NAD(+) is bound by residues 2-19, V11, D30, K35, T121, and E152; that span reads NITF…GVMM. Residues 148–152, K204, N208, 249–253, and G257 each bind substrate; these read EFLRE and FLNAG. The active-site Nucleophile is C260. K263 serves as a coordination point for NAD(+). K321 contributes to the substrate binding site. Residue R328 participates in NAD(+) binding.

Belongs to the UDP-glucose/GDP-mannose dehydrogenase family.

The catalysed reaction is UDP-alpha-D-glucose + 2 NAD(+) + H2O = UDP-alpha-D-glucuronate + 2 NADH + 3 H(+). It functions in the pathway nucleotide-sugar biosynthesis; UDP-alpha-D-glucuronate biosynthesis; UDP-alpha-D-glucuronate from UDP-alpha-D-glucose: step 1/1. The sequence is that of UDP-glucose 6-dehydrogenase (udg) from Rickettsia bellii (strain RML369-C).